The following is a 454-amino-acid chain: tRNA-2-methylthio-N(6)-dimethylallyladenosine synthase (454 aa).

Positions R6 to D122 constitute an MTTase N-terminal domain. The [4Fe-4S] cluster site is built by C15, C51, C85, C157, C161, and C164. Residues R143 to R381 form the Radical SAM core domain. The region spanning Q383–E447 is the TRAM domain.

It belongs to the methylthiotransferase family. MiaB subfamily. In terms of assembly, monomer. Requires [4Fe-4S] cluster as cofactor.

It localises to the cytoplasm. It carries out the reaction N(6)-dimethylallyladenosine(37) in tRNA + (sulfur carrier)-SH + AH2 + 2 S-adenosyl-L-methionine = 2-methylsulfanyl-N(6)-dimethylallyladenosine(37) in tRNA + (sulfur carrier)-H + 5'-deoxyadenosine + L-methionine + A + S-adenosyl-L-homocysteine + 2 H(+). Its function is as follows. Catalyzes the methylthiolation of N6-(dimethylallyl)adenosine (i(6)A), leading to the formation of 2-methylthio-N6-(dimethylallyl)adenosine (ms(2)i(6)A) at position 37 in tRNAs that read codons beginning with uridine. The polypeptide is tRNA-2-methylthio-N(6)-dimethylallyladenosine synthase (Nostoc punctiforme (strain ATCC 29133 / PCC 73102)).